A 113-amino-acid chain; its full sequence is U11-theraphotoxin-Hhn1n (113 aa).

The N-terminal stretch at 1–21 (MNTVRVTFLLVFVLAVSLGQA) is a signal peptide. A propeptide spanning residues 22 to 74 (DKDENRMEMQEKTEQGKSYLDFAENLLLQKLEELEAKLLEEDSEESRNSRQKR) is cleaved from the precursor. The span at 60–69 (LEEDSEESRN) shows a compositional bias: basic and acidic residues. A disordered region spans residues 60-83 (LEEDSEESRNSRQKRCIGEGVPCD). Intrachain disulfides connect cysteine 75–cysteine 90 and cysteine 89–cysteine 110.

This sequence belongs to the neurotoxin 14 (magi-1) family. 01 (HNTX-16) subfamily. Expressed by the venom gland.

The protein resides in the secreted. Functionally, probable ion channel inhibitor. This Cyriopagopus hainanus (Chinese bird spider) protein is U11-theraphotoxin-Hhn1n.